A 290-amino-acid polypeptide reads, in one-letter code: Fructose-1,6-bisphosphatase class 1 (290 aa).

Mg(2+) contacts are provided by glutamate 78, aspartate 96, leucine 98, and aspartate 99. Residues 99–102 (DGSS), tyrosine 201, and lysine 226 each bind substrate. Glutamate 232 is a binding site for Mg(2+).

The protein belongs to the FBPase class 1 family. As to quaternary structure, homotetramer. The cofactor is Mg(2+).

It is found in the cytoplasm. The catalysed reaction is beta-D-fructose 1,6-bisphosphate + H2O = beta-D-fructose 6-phosphate + phosphate. The protein operates within carbohydrate biosynthesis; gluconeogenesis. This chain is Fructose-1,6-bisphosphatase class 1, found in Helicobacter pylori (strain HPAG1).